A 505-amino-acid polypeptide reads, in one-letter code: UDP-N-acetylmuramyl-tripeptide synthetase (505 aa).

Residue serine 35 coordinates UDP-N-acetyl-alpha-D-muramoyl-L-alanyl-D-glutamate. 118 to 124 (GTDGKSS) provides a ligand contact to ATP. Residues 163 to 164 (ST), threonine 190, and arginine 200 each bind UDP-N-acetyl-alpha-D-muramoyl-L-alanyl-D-glutamate. Residue lysine 232 is modified to N6-carboxylysine.

It belongs to the MurCDEF family. MurE subfamily. In terms of processing, carboxylation is probably crucial for Mg(2+) binding and, consequently, for the gamma-phosphate positioning of ATP.

It is found in the cytoplasm. The protein operates within cell wall biogenesis; peptidoglycan biosynthesis. In terms of biological role, catalyzes the addition of an amino acid to the nucleotide precursor UDP-N-acetylmuramoyl-L-alanyl-D-glutamate (UMAG) in the biosynthesis of bacterial cell-wall peptidoglycan. This is UDP-N-acetylmuramyl-tripeptide synthetase from Borreliella afzelii (strain PKo) (Borrelia afzelii).